The following is a 130-amino-acid chain: DNA-directed RNA polymerase subunit omega (130 aa).

The interval 109 to 130 (EEELLKGLEGLAPPEEQPEEDE) is disordered.

The protein belongs to the RNA polymerase subunit omega family. As to quaternary structure, the RNAP catalytic core consists of 2 alpha, 1 beta, 1 beta' and 1 omega subunit. When a sigma factor is associated with the core the holoenzyme is formed, which can initiate transcription.

It carries out the reaction RNA(n) + a ribonucleoside 5'-triphosphate = RNA(n+1) + diphosphate. In terms of biological role, promotes RNA polymerase assembly. Latches the N- and C-terminal regions of the beta' subunit thereby facilitating its interaction with the beta and alpha subunits. In Rhodopseudomonas palustris (strain BisA53), this protein is DNA-directed RNA polymerase subunit omega.